Reading from the N-terminus, the 518-residue chain is ATP synthase subunit alpha (518 aa).

169 to 176 (GDRKTGKT) contacts ATP.

The protein belongs to the ATPase alpha/beta chains family. F-type ATPases have 2 components, CF(1) - the catalytic core - and CF(0) - the membrane proton channel. CF(1) has five subunits: alpha(3), beta(3), gamma(1), delta(1), epsilon(1). CF(0) has three main subunits: a(1), b(2) and c(9-12). The alpha and beta chains form an alternating ring which encloses part of the gamma chain. CF(1) is attached to CF(0) by a central stalk formed by the gamma and epsilon chains, while a peripheral stalk is formed by the delta and b chains.

The protein resides in the cell membrane. It catalyses the reaction ATP + H2O + 4 H(+)(in) = ADP + phosphate + 5 H(+)(out). In terms of biological role, produces ATP from ADP in the presence of a proton gradient across the membrane. The alpha chain is a regulatory subunit. The chain is ATP synthase subunit alpha from Enterococcus faecalis (strain ATCC 700802 / V583).